A 770-amino-acid chain; its full sequence is 1,4-alpha-glucan branching enzyme GlgB (770 aa).

Aspartate 437 serves as the catalytic Nucleophile. The Proton donor role is filled by glutamate 488.

The protein belongs to the glycosyl hydrolase 13 family. GlgB subfamily. In terms of assembly, monomer.

The enzyme catalyses Transfers a segment of a (1-&gt;4)-alpha-D-glucan chain to a primary hydroxy group in a similar glucan chain.. It functions in the pathway glycan biosynthesis; glycogen biosynthesis. In terms of biological role, catalyzes the formation of the alpha-1,6-glucosidic linkages in glycogen by scission of a 1,4-alpha-linked oligosaccharide from growing alpha-1,4-glucan chains and the subsequent attachment of the oligosaccharide to the alpha-1,6 position. The sequence is that of 1,4-alpha-glucan branching enzyme GlgB from Synechococcus sp. (strain JA-3-3Ab) (Cyanobacteria bacterium Yellowstone A-Prime).